Here is a 126-residue protein sequence, read N- to C-terminus: Large ribosomal subunit protein bL19 (126 aa).

This sequence belongs to the bacterial ribosomal protein bL19 family.

Its function is as follows. This protein is located at the 30S-50S ribosomal subunit interface and may play a role in the structure and function of the aminoacyl-tRNA binding site. The chain is Large ribosomal subunit protein bL19 from Bordetella bronchiseptica (strain ATCC BAA-588 / NCTC 13252 / RB50) (Alcaligenes bronchisepticus).